The sequence spans 82 residues: Antitoxin MazE2 (82 aa).

As to quaternary structure, probably forms a complex with cognate toxin MazF2.

In terms of biological role, antitoxin component of a type II toxin-antitoxin (TA) system. Labile antitoxin that binds to cognate MazF2 toxin and counteracts its endoribonuclease activity. This Mycobacterium bovis (strain ATCC BAA-935 / AF2122/97) protein is Antitoxin MazE2 (mazE2).